The chain runs to 356 residues: Phospho-N-acetylmuramoyl-pentapeptide-transferase (356 aa).

10 helical membrane-spanning segments follow: residues Thr25–Ala45, Gly70–Trp90, Leu93–Phe113, Phe138–Leu158, Tyr164–Gly184, Gly195–Cys215, Leu235–Pro255, Ala258–Val278, Ile284–Val304, and Gln333–Leu353.

This sequence belongs to the glycosyltransferase 4 family. MraY subfamily. Requires Mg(2+) as cofactor.

The protein resides in the cell inner membrane. It catalyses the reaction UDP-N-acetyl-alpha-D-muramoyl-L-alanyl-gamma-D-glutamyl-meso-2,6-diaminopimeloyl-D-alanyl-D-alanine + di-trans,octa-cis-undecaprenyl phosphate = di-trans,octa-cis-undecaprenyl diphospho-N-acetyl-alpha-D-muramoyl-L-alanyl-D-glutamyl-meso-2,6-diaminopimeloyl-D-alanyl-D-alanine + UMP. The protein operates within cell wall biogenesis; peptidoglycan biosynthesis. Its function is as follows. Catalyzes the initial step of the lipid cycle reactions in the biosynthesis of the cell wall peptidoglycan: transfers peptidoglycan precursor phospho-MurNAc-pentapeptide from UDP-MurNAc-pentapeptide onto the lipid carrier undecaprenyl phosphate, yielding undecaprenyl-pyrophosphoryl-MurNAc-pentapeptide, known as lipid I. This chain is Phospho-N-acetylmuramoyl-pentapeptide-transferase, found in Bartonella tribocorum (strain CIP 105476 / IBS 506).